Consider the following 137-residue polypeptide: BolA-like protein 1 (137 aa).

S81 is subject to Phosphoserine. A disordered region spans residues 115-137; it reads RENPQLDISPPCLGGSKKTRGTS.

Belongs to the BolA/IbaG family. Interacts with GLRX5.

Its subcellular location is the mitochondrion. Its function is as follows. Acts as a mitochondrial iron-sulfur (Fe-S) cluster assembly factor that facilitates (Fe-S) cluster insertion into a subset of mitochondrial proteins. Probably acts together with the monothiol glutaredoxin GLRX5. May protect cells against oxidative stress. This is BolA-like protein 1 (Bola1) from Mus musculus (Mouse).